The sequence spans 505 residues: uncharacterized protein (505 aa).

The active-site Proton acceptor is the H431.

This sequence belongs to the GMC oxidoreductase family. FAD serves as cofactor.

This is an uncharacterized protein from Sinorhizobium fredii (strain NBRC 101917 / NGR234).